The chain runs to 443 residues: Fatty acid desaturase 3 (443 aa).

Residues 1–130 (MGGVGEPDWE…EDMKLFEAKP (130 aa)) are Cytoplasmic-facing. The region spanning 18 to 95 (LPTLRWEQVR…LQPLLIGELA (78 aa)) is the Cytochrome b5 heme-binding domain. The helical transmembrane segment at 131–151 (AFFGLLLGHILAMEVLAWLMI) threads the bilayer. Position 152 (Tyr-152) is a topological domain, lumenal. The helical transmembrane segment at 153-173 (MLGPGWVPSTLAALILAISQA) threads the bilayer. The Cytoplasmic portion of the chain corresponds to 174-259 (QSWCLQHDLG…KKKRRYLPYN (86 aa)). The Histidine box-1 signature appears at 180-184 (HDLGH). A Histidine box-2 motif is present at residues 217-221 (HFQHH). Residues 260-280 (HQHLYFFLIGPPLLTLVNFEV) traverse the membrane as a helical segment. The Lumenal portion of the chain corresponds to 281-282 (EN). Residues 283–303 (LAYMLVCMQWMDLLWAASFYA) form a helical membrane-spanning segment. Residue Arg-304 is a topological domain, cytoplasmic. Residues 305 to 325 (FLLSYIPFYGIPGALLLFVAV) traverse the membrane as a helical segment. Over 326–443 (RVLESHWFVW…NVWLEAYLHQ (118 aa)) the chain is Lumenal. Residues 381 to 385 (QIEHH) carry the Histidine box-3 motif.

The protein belongs to the fatty acid desaturase type 1 family.

The protein localises to the endoplasmic reticulum membrane. It carries out the reaction an N-acylsphing-4-enine + 2 Fe(II)-[cytochrome b5] + O2 + 2 H(+) = an N-acyl-sphinga-4E,14Z-dienine + 2 Fe(III)-[cytochrome b5] + 2 H2O. It catalyses the reaction N-(hexanoyl)sphing-4-enine + 2 Fe(II)-[cytochrome b5] + O2 + 2 H(+) = N-hexanoyl-sphinga-4E,14Z-dienine + 2 Fe(III)-[cytochrome b5] + 2 H2O. The catalysed reaction is sphing-4-enine + 2 Fe(II)-[cytochrome b5] + O2 + 2 H(+) = sphinga-4E,14Z-dienine + 2 Fe(III)-[cytochrome b5] + 2 H2O. The enzyme catalyses (11E)-octadecenoyl-CoA + 2 Fe(II)-[cytochrome b5] + O2 + 2 H(+) = (11E,13Z)-octadecadienoyl-CoA + 2 Fe(III)-[cytochrome b5] + 2 H2O. It carries out the reaction N-acyl-1-deoxysphinganine + 2 Fe(II)-[cytochrome b5] + O2 + 2 H(+) = N-acyl-1-deoxysphing-14Z-enine + 2 Fe(III)-[cytochrome b5] + 2 H2O. It catalyses the reaction an N-acylsphinganine + 2 Fe(II)-[cytochrome b5] + O2 + 2 H(+) = an N-acylsphing-14Z-enine + 2 Fe(III)-[cytochrome b5] + 2 H2O. The protein operates within lipid metabolism; polyunsaturated fatty acid biosynthesis. It participates in lipid metabolism; sphingolipid metabolism. In terms of biological role, mammals have different sphingoid bases that differ in their length and/or pattern of desaturation and hydroxyl groups. The predominant sphingoid base that comprises mammalian ceramides is sphing-4-enine (sphingosine or SPH) which has a trans (E) desaturation at carbon 4. FADS3 is a desaturase that introduces a cis (Z) double bond between carbon 14 and carbon 15 of the sphingoid base (also known as long chain base, LCB), producing LCBs such as sphinga-4,14-dienine (SPD, d18:2(4E,14Z)) from SPH. Prefers SPH-containing ceramides (N-acylsphing-4-enines) as substrates. Capable of metabolizing also the SPH in its free form. SPD ceramides occur widely in mammalian tissues and cells. Due to their unusual structure containing a cis double bond, SPD ceramides may have an opposite, negative role in lipid microdomain formation relative to conventional ceramides. Could be involved in the detoxification of 1-deoxy sphingolipids, by desaturating the cytotoxic 1-deoxysphinganine (1-deoxySA, m18:0), produced under pathological conditions, to 1-deoxysphingenine (1-deoxysphingosine, 1-deoxySO, m18:1). Although prefers SPH-containing ceramides (N-acylsphing-4-enines) as substrates, it also exhibits activity toward dihydrosphingosine-containing CERs (N-acylsphinganines) and produces 14Z-SPH-containing sphingolipids. Its desaturase mechanism involves an electron transfer facilitated by cytochrome b5. FADS3 also acts as a methyl-end fatty acyl coenzyme A (CoA) desaturase that introduces a cis double bond between the preexisting double bond and the terminal methyl group of the fatty acyl chain. Desaturates (11E)-octadecenoate (trans-vaccenoate, the predominant trans fatty acid in human milk) at carbon 13 to generate (11E,13Z)-octadecadienoate (also known as conjugated linoleic acid 11E,13Z-CLA). In Bos taurus (Bovine), this protein is Fatty acid desaturase 3.